Reading from the N-terminus, the 97-residue chain is Large ribosomal subunit protein bL27 (97 aa).

The propeptide occupies 1–12 (MLKMNLANLQLF). Residues 14-37 (HKKGGGSTSNGRDSQAKRLGAKAA) form a disordered region.

This sequence belongs to the bacterial ribosomal protein bL27 family. In terms of processing, the N-terminus is cleaved by ribosomal processing cysteine protease Prp.

The polypeptide is Large ribosomal subunit protein bL27 (Streptococcus gordonii (strain Challis / ATCC 35105 / BCRC 15272 / CH1 / DL1 / V288)).